Consider the following 479-residue polypeptide: MASTATCTRFTDEYQLFEELGKGAFSVVRRCMKITTGQEYAAKIINTKKLSARDHQKLEREARICRLLKHPNIVRLHDSISEEGFHYLVFDLVTGGELFEDIVAREYYSEADASHCIQQILESVNHCHLNGIVHRDLKPENLLLASKSKGAAVKLADFGLAIEVQGEQQAWFGFAGTPGYLSPEVLRKDPYGKPVDMWACGVILYILLVGYPPFWDEDQHRLYQQIKAGAYDFPSPEWDTVTPEAKDLINKMLTINPAKRITASEALKHPWICQRSTVASMMHRQETVDCLKKFNARRKLKGAILTTMLATRNFSAAKSLLKKPDGVKESTESSNTTIEDEDVKARKQEIIKVTEQLIEAINNGDFEAYTKICDPGLTSFEPEALGNLVEGMDFHRFYFENALSKSNKPIHTIILNPHVHLVGDDAACIAYIRLTQYMDGTGMPKTMQSEETRVWHRRDGKWQNVHFHRSGSPTVPINA.

The Protein kinase domain maps to 14-272; the sequence is YQLFEELGKG…ASEALKHPWI (259 aa). ATP contacts are provided by residues 20 to 28 and K43; that span reads LGKGAFSVV. The active-site Proton acceptor is D136. T287 is subject to Phosphothreonine. Phosphoserine occurs at positions 315 and 319. T337 is subject to Phosphothreonine.

This sequence belongs to the protein kinase superfamily. CAMK Ser/Thr protein kinase family. CaMK subfamily. CAMK2 is composed of four different chains: alpha, beta, gamma, and delta. The different isoforms assemble into homo- or heteromultimeric holoenzymes composed of 8 to 12 subunits.

The catalysed reaction is L-seryl-[protein] + ATP = O-phospho-L-seryl-[protein] + ADP + H(+). The enzyme catalyses L-threonyl-[protein] + ATP = O-phospho-L-threonyl-[protein] + ADP + H(+). With respect to regulation, autophosphorylation of CAMK2 plays an important role in the regulation of the kinase activity. In terms of biological role, caM-kinase II (CAMK2) is a prominent kinase in the central nervous system. The sequence is that of Calcium/calmodulin-dependent protein kinase type II delta chain (CAMK2D) from Gallus gallus (Chicken).